The sequence spans 85 residues: Putative regulatory protein Dtur_1444 (85 aa).

Belongs to the RemA family.

This chain is Putative regulatory protein Dtur_1444, found in Dictyoglomus turgidum (strain DSM 6724 / Z-1310).